A 106-amino-acid chain; its full sequence is UPF0145 protein CKL_2433 (106 aa).

The protein belongs to the UPF0145 family.

The sequence is that of UPF0145 protein CKL_2433 from Clostridium kluyveri (strain ATCC 8527 / DSM 555 / NBRC 12016 / NCIMB 10680 / K1).